Reading from the N-terminus, the 227-residue chain is Testis-expressed protein 30 (227 aa).

This is Testis-expressed protein 30 (TEX30) from Homo sapiens (Human).